A 407-amino-acid polypeptide reads, in one-letter code: Vancomycin aglycone glucosyltransferase (407 aa).

Belongs to the glycosyltransferase 28 family.

It catalyses the reaction vancomycin aglycone + UDP-alpha-D-glucose = devancoaminyl-vancomycin + UDP. It functions in the pathway antibiotic biosynthesis; vancomycin biosynthesis. Its function is as follows. Glucosyltransferase that transfers glucose to the 4-OH-Phegly(4) residue of vancomycin aglycone (AGV) to produce devancoaminyl-vancomycin (DVV) in the biosynthesis of glycopeptide antibiotic chloroeremomycin, a member of the vancomycin group of antibiotics. The sequence is that of Vancomycin aglycone glucosyltransferase (gtfB) from Amycolatopsis orientalis (Nocardia orientalis).